Here is a 378-residue protein sequence, read N- to C-terminus: TelA-like protein SAUSA300_1299 (378 aa).

Belongs to the TelA family.

This chain is TelA-like protein SAUSA300_1299, found in Staphylococcus aureus (strain USA300).